The following is a 304-amino-acid chain: MDKLPCNELNQVRKAPHAAIGPVLIEALPYIRKFEGKTFVIKYGGAAMKDACLKNSFAQNVTLLRKVGIRIVLVHGGGDAITKTAEKLGITSRFLHGRRVTDKEMISVIQMTLAGKVNQDIVQLISEHGGKAVGVTGLDADTIKALPHPNAETLGLVGEVEQINTAYIDLLCRAGLIPVIAPIGFDDKGNVYNINADDAASSIAIALKAEKLIYVSDVEGIHVGERILKTICKTEAADFIEQGIISGGMIPKVLSAFKTLDSGVGKIHLIDGKATHSLLLEIFTHEGVGTQFIAEQDSDQSQNR.

Substrate-binding positions include 77–78 (GG), Arg99, and Asn193.

The protein belongs to the acetylglutamate kinase family. ArgB subfamily.

Its subcellular location is the cytoplasm. It catalyses the reaction N-acetyl-L-glutamate + ATP = N-acetyl-L-glutamyl 5-phosphate + ADP. Its pathway is amino-acid biosynthesis; L-arginine biosynthesis; N(2)-acetyl-L-ornithine from L-glutamate: step 2/4. In terms of biological role, catalyzes the ATP-dependent phosphorylation of N-acetyl-L-glutamate. The polypeptide is Acetylglutamate kinase (Pelodictyon phaeoclathratiforme (strain DSM 5477 / BU-1)).